Consider the following 416-residue polypeptide: CinA-like protein (416 aa).

The protein belongs to the CinA family.

The polypeptide is CinA-like protein (Synechocystis sp. (strain ATCC 27184 / PCC 6803 / Kazusa)).